Consider the following 141-residue polypeptide: Large ribosomal subunit protein uL11 (141 aa).

This sequence belongs to the universal ribosomal protein uL11 family. In terms of assembly, part of the ribosomal stalk of the 50S ribosomal subunit. Interacts with L10 and the large rRNA to form the base of the stalk. L10 forms an elongated spine to which L12 dimers bind in a sequential fashion forming a multimeric L10(L12)X complex. In terms of processing, one or more lysine residues are methylated.

Functionally, forms part of the ribosomal stalk which helps the ribosome interact with GTP-bound translation factors. In Roseiflexus sp. (strain RS-1), this protein is Large ribosomal subunit protein uL11.